A 90-amino-acid polypeptide reads, in one-letter code: MKTLPVLVLSLTLLTVFSETSPILTEKQAKQLLRSRRQDRPSKPGFPDEPMREYMHHLLALEHRAEEQFLEHWLNPHCKPHCDRNRIHPV.

The first 18 residues, 1–18 (MKTLPVLVLSLTLLTVFS), serve as a signal peptide directing secretion. Residues 28–50 (QAKQLLRSRRQDRPSKPGFPDEP) form a disordered region.

The protein resides in the secreted. This is an uncharacterized protein from Homo sapiens (Human).